A 716-amino-acid polypeptide reads, in one-letter code: Fatty acid oxidation complex subunit alpha (716 aa).

The enoyl-CoA hydratase/isomerase stretch occupies residues 1 to 188 (MIYQSPTIQV…KVGAIDAVVA (188 aa)). Aspartate 295 serves as a coordination point for substrate. The tract at residues 310-716 (KDIKHAAVLG…SNNGSYYPKA (407 aa)) is 3-hydroxyacyl-CoA dehydrogenase. NAD(+) is bound by residues methionine 323, aspartate 342, 399-401 (VVE), lysine 406, and serine 428. Histidine 449 serves as the catalytic For 3-hydroxyacyl-CoA dehydrogenase activity. Position 452 (asparagine 452) interacts with NAD(+). Asparagine 499 and tyrosine 659 together coordinate substrate.

The protein in the N-terminal section; belongs to the enoyl-CoA hydratase/isomerase family. This sequence in the C-terminal section; belongs to the 3-hydroxyacyl-CoA dehydrogenase family. Heterotetramer of two alpha chains (FadB) and two beta chains (FadA).

It carries out the reaction a (3S)-3-hydroxyacyl-CoA + NAD(+) = a 3-oxoacyl-CoA + NADH + H(+). The enzyme catalyses a (3S)-3-hydroxyacyl-CoA = a (2E)-enoyl-CoA + H2O. It catalyses the reaction a 4-saturated-(3S)-3-hydroxyacyl-CoA = a (3E)-enoyl-CoA + H2O. The catalysed reaction is (3S)-3-hydroxybutanoyl-CoA = (3R)-3-hydroxybutanoyl-CoA. It carries out the reaction a (3Z)-enoyl-CoA = a 4-saturated (2E)-enoyl-CoA. The enzyme catalyses a (3E)-enoyl-CoA = a 4-saturated (2E)-enoyl-CoA. Its pathway is lipid metabolism; fatty acid beta-oxidation. Functionally, involved in the aerobic and anaerobic degradation of long-chain fatty acids via beta-oxidation cycle. Catalyzes the formation of 3-oxoacyl-CoA from enoyl-CoA via L-3-hydroxyacyl-CoA. It can also use D-3-hydroxyacyl-CoA and cis-3-enoyl-CoA as substrate. This Shewanella amazonensis (strain ATCC BAA-1098 / SB2B) protein is Fatty acid oxidation complex subunit alpha.